We begin with the raw amino-acid sequence, 219 residues long: Lipid A acyltransferase PagP (219 aa).

Residues 1–28 (MRLILISHSRLFALSALFLIPTFDSLSA) form the signal peptide. Residues 39–63 (IDRTTQSDSTTQRDSKTRRDPAPSF) form a disordered region. A compositionally biased stretch (basic and acidic residues) spans 49 to 59 (TQRDSKTRRDP). Catalysis depends on residues His-91, Asp-134, and Ser-135.

It belongs to the lipid A palmitoyltransferase family. In terms of assembly, homodimer.

The protein resides in the cell outer membrane. The enzyme catalyses a lipid A + a 1,2-diacyl-sn-glycero-3-phosphocholine = a hepta-acyl lipid A + a 2-acyl-sn-glycero-3-phosphocholine. It catalyses the reaction a lipid IVA + a 1,2-diacyl-sn-glycero-3-phosphocholine = a lipid IVB + a 2-acyl-sn-glycero-3-phosphocholine. The catalysed reaction is a lipid IIA + a 1,2-diacyl-sn-glycero-3-phosphocholine = a lipid IIB + a 2-acyl-sn-glycero-3-phosphocholine. Its function is as follows. Transfers a fatty acid residue from the sn-1 position of a phospholipid to the N-linked hydroxyfatty acid chain on the proximal unit of lipid A or its precursors. This Dickeya zeae (strain Ech586) (Dickeya dadantii (strain Ech586)) protein is Lipid A acyltransferase PagP.